A 55-amino-acid polypeptide reads, in one-letter code: Small ribosomal subunit protein uS14 (55 aa).

Positions Met-1–Arg-20 are disordered. 4 residues coordinate Zn(2+): Cys-22, Cys-25, Cys-38, and Cys-41.

Belongs to the universal ribosomal protein uS14 family. The cofactor is Zn(2+).

This chain is Small ribosomal subunit protein uS14 (RPS29), found in Encephalitozoon cuniculi (strain GB-M1) (Microsporidian parasite).